Here is a 154-residue protein sequence, read N- to C-terminus: Peptidoglycan amidase Tse1 (154 aa).

An intrachain disulfide couples cysteine 7 to cysteine 148. The Nucleophile role is filled by cysteine 30. Histidine 91 (proton acceptor) is an active-site residue.

Forms a heterotetramer with Tsi1 consisting of two Tse1 dimers and two Tsi1 dimers. Formation of the complex inactivates Tse1 enzymatic activity.

Its subcellular location is the host membrane. It is found in the secreted. The catalysed reaction is Hydrolysis of gamma-D-glutamyl bonds to the L-terminus (position 7) of meso-diaminopimelic acid (meso-A2pm) in 7-(L-Ala-gamma-D-Glu)-meso-A2pm and 7-(L-Ala-gamma-D-Glu)-7-(D-Ala)-meso-A2pm. It is required that the D-terminal amino and carboxy groups of meso-A2pm are unsubstituted.. In terms of biological role, toxin secreted by the H1 type VI (H1-T6SS) secretion system into the periplasm of recipient cells. Degrades peptidoglycan via amidase activity thereby helping itself to compete with other bacteria. To protect itself, the bacterium synthesizes immunity protein Tsi1 that specifically interacts with and inactivates cognate toxin. This is Peptidoglycan amidase Tse1 from Pseudomonas aeruginosa (strain ATCC 15692 / DSM 22644 / CIP 104116 / JCM 14847 / LMG 12228 / 1C / PRS 101 / PAO1).